A 436-amino-acid chain; its full sequence is Suppressor of cytokine signaling 4 (436 aa).

Positions 1–25 are disordered; that stretch reads MAENNSKNVDVRPKTSRSRSADRKD. Residues 9–25 are compositionally biased toward basic and acidic residues; that stretch reads VDVRPKTSRSRSADRKD. The SH2 domain maps to 283-378; that stretch reads CYWGVMDKYA…FFEPLLSTPL (96 aa). The SOCS box domain maps to 373 to 422; the sequence is LLSTPLIRTFPFSLQHICRTVICNCTTYDGIDALPIPSPMKLYLKEYHYK.

Its pathway is protein modification; protein ubiquitination. SOCS family proteins form part of a classical negative feedback system that regulates cytokine signal transduction. Substrate-recognition component of a SCF-like ECS (Elongin BC-CUL2/5-SOCS-box protein) E3 ubiquitin-protein ligase complex which mediates the ubiquitination and subsequent proteasomal degradation of target proteins. Inhibits EGF signaling by mediating the degradation of the Tyr-phosphorylated EGF receptor/EGFR. The polypeptide is Suppressor of cytokine signaling 4 (Socs4) (Mus musculus (Mouse)).